The following is a 729-amino-acid chain: Glycerophosphodiester phosphodiesterase GDPDL5 (729 aa).

Positions 1-22 (MACPRVIFLILITFFILQTAFS) are cleaved as a signal peptide. GP-PDE domains follow at residues 33-320 (PAVI…YRAI) and 337-645 (ITII…ARYR). N-linked (GlcNAc...) asparagine glycans are attached at residues asparagine 88, asparagine 162, asparagine 218, asparagine 227, asparagine 285, asparagine 302, asparagine 390, asparagine 401, and asparagine 507. Residues 709 to 729 (AIEVPFAFIAMAILVCFFISV) form a helical membrane-spanning segment.

The protein belongs to the glycerophosphoryl diester phosphodiesterase family. Expressed in stems, flowers and siliques.

Its subcellular location is the membrane. It carries out the reaction a sn-glycero-3-phosphodiester + H2O = an alcohol + sn-glycerol 3-phosphate + H(+). In Arabidopsis thaliana (Mouse-ear cress), this protein is Glycerophosphodiester phosphodiesterase GDPDL5.